Here is a 446-residue protein sequence, read N- to C-terminus: NADH-quinone oxidoreductase subunit D (446 aa).

This sequence belongs to the complex I 49 kDa subunit family. In terms of assembly, NDH-1 is composed of 14 different subunits. Subunits NuoB, C, D, E, F, and G constitute the peripheral sector of the complex.

It is found in the cell membrane. It carries out the reaction a quinone + NADH + 5 H(+)(in) = a quinol + NAD(+) + 4 H(+)(out). NDH-1 shuttles electrons from NADH, via FMN and iron-sulfur (Fe-S) centers, to quinones in the respiratory chain. The immediate electron acceptor for the enzyme in this species is believed to be a menaquinone. Couples the redox reaction to proton translocation (for every two electrons transferred, four hydrogen ions are translocated across the cytoplasmic membrane), and thus conserves the redox energy in a proton gradient. The protein is NADH-quinone oxidoreductase subunit D of Mycobacterium sp. (strain JLS).